The chain runs to 284 residues: Probable palmitoyltransferase ZDHHC24 (284 aa).

Residues 1–18 (MGESWAARGAEGAPARMP) lie on the Cytoplasmic side of the membrane. A helical membrane pass occupies residues 19–39 (LVLTALWAAVVVLELAYVMVL). At 40–52 (GPGPPPLGPLARA) the chain is on the extracellular side. Residues 53 to 73 (LQLALAAYQLLNLLGNVVLFL) form a helical membrane-spanning segment. Residues 74 to 137 (RSDPSIRGVM…GCCVGFHNYR (64 aa)) are Cytoplasmic-facing. The DHHC domain occupies 94-144 (AYCYQCQSQVPPRSGHCSACRVCILRRDHHCRLLGCCVGFHNYRPFLCLLL). Cys-124 functions as the S-palmitoyl cysteine intermediate in the catalytic mechanism. Residues 138-158 (PFLCLLLHSAGVLLHISVLLG) form a helical membrane-spanning segment. Residues 159 to 166 (PALSALLQ) lie on the Extracellular side of the membrane. The helical transmembrane segment at 167–187 (AHSALYTVALLLLPWLMLLTG) threads the bilayer. The Cytoplasmic portion of the chain corresponds to 188–195 (KVSLAQFA). The chain crosses the membrane as a helical span at residues 196 to 216 (LAFVVDTCVAGALLCGAGLLF). The Extracellular segment spans residues 217 to 284 (HGMLLLRGQT…TPGDVGLVTS (68 aa)).

Belongs to the DHHC palmitoyltransferase family.

Its subcellular location is the membrane. It catalyses the reaction L-cysteinyl-[protein] + hexadecanoyl-CoA = S-hexadecanoyl-L-cysteinyl-[protein] + CoA. Functionally, probable palmitoyltransferase that could catalyze the addition of palmitate onto various protein substrates. The chain is Probable palmitoyltransferase ZDHHC24 from Mus musculus (Mouse).